Consider the following 262-residue polypeptide: Protein crossbronx-like (262 aa).

The UBC core domain occupies 15 to 179; that stretch reads RQGYQVLAEY…VQELALFTKK (165 aa).

Belongs to the ubiquitin-conjugating enzyme family. FTS subfamily.

The sequence is that of Protein crossbronx-like from Drosophila pseudoobscura pseudoobscura (Fruit fly).